The sequence spans 318 residues: Quinolinate synthase (318 aa).

The iminosuccinate site is built by histidine 34 and serine 51. [4Fe-4S] cluster is bound at residue cysteine 96. Iminosuccinate-binding positions include 122–124 and serine 139; that span reads YIN. Cysteine 182 contributes to the [4Fe-4S] cluster binding site. Residues 208 to 210 and threonine 225 contribute to the iminosuccinate site; that span reads HPE. Cysteine 275 is a binding site for [4Fe-4S] cluster.

It belongs to the quinolinate synthase family. Type 2 subfamily. [4Fe-4S] cluster serves as cofactor.

It is found in the cytoplasm. The enzyme catalyses iminosuccinate + dihydroxyacetone phosphate = quinolinate + phosphate + 2 H2O + H(+). It participates in cofactor biosynthesis; NAD(+) biosynthesis; quinolinate from iminoaspartate: step 1/1. Catalyzes the condensation of iminoaspartate with dihydroxyacetone phosphate to form quinolinate. The polypeptide is Quinolinate synthase (Synechocystis sp. (strain ATCC 27184 / PCC 6803 / Kazusa)).